A 367-amino-acid chain; its full sequence is Pre-small/secreted glycoprotein (367 aa).

A signal peptide spans 1–33; that stretch reads MGSGYQLLQLPRERFRKTSFLVWVIILFQRAIS. Asparagine 41 is a glycosylation site (N-linked (GlcNAc...) asparagine; by host). Disulfide bonds link cysteine 109–cysteine 136 and cysteine 122–cysteine 148. Residues asparagine 205, asparagine 229, asparagine 239, asparagine 258, and asparagine 269 are each glycosylated (N-linked (GlcNAc...) asparagine; by host).

Belongs to the filoviruses glycoprotein family. Homodimer; disulfide-linked. The homodimers are linked by two disulfide bonds in a parallel orientation. As to quaternary structure, monomer. In terms of processing, this precursor is processed into mature sGP and delta-peptide by host furin or furin-like proteases. The cleavage site corresponds to the furin optimal cleavage sequence [KR]-X-[KR]-R. Post-translationally, N-glycosylated. O-glycosylated.

Its subcellular location is the secreted. Seems to possess an anti-inflammatory activity as it can reverse the barrier-decreasing effects of TNF alpha. Might therefore contribute to the lack of inflammatory reaction seen during infection in spite the of extensive necrosis and massive virus production. Does not seem to be involved in activation of primary macrophages. Does not seem to interact specifically with neutrophils. In terms of biological role, viroporin that permeabilizes mammalian cell plasma membranes. It acts by altering permeation of ionic compounds and small molecules. This activity may lead to viral enterotoxic activity. The polypeptide is Pre-small/secreted glycoprotein (GP) (Epomops franqueti (Franquet's epauletted fruit bat)).